Reading from the N-terminus, the 85-residue chain is Putative membrane protein insertion efficiency factor (85 aa).

The protein belongs to the UPF0161 family.

It is found in the cell inner membrane. Functionally, could be involved in insertion of integral membrane proteins into the membrane. The chain is Putative membrane protein insertion efficiency factor from Fervidobacterium nodosum (strain ATCC 35602 / DSM 5306 / Rt17-B1).